A 118-amino-acid polypeptide reads, in one-letter code: UPF0102 protein Bcav_2532 (118 aa).

The protein belongs to the UPF0102 family.

This Beutenbergia cavernae (strain ATCC BAA-8 / DSM 12333 / CCUG 43141 / JCM 11478 / NBRC 16432 / NCIMB 13614 / HKI 0122) protein is UPF0102 protein Bcav_2532.